The following is a 500-amino-acid chain: Taxoid 7-beta-hydroxylase (500 aa).

A helical transmembrane segment spans residues 24–44 (PAILSTALTAIAGIIVLLVIT). Cys446 contributes to the heme binding site.

The protein belongs to the cytochrome P450 family.

It is found in the microsome membrane. The catalysed reaction is taxusin + reduced [NADPH--hemoprotein reductase] + O2 = 7beta-hydroxytaxusin + oxidized [NADPH--hemoprotein reductase] + H2O + H(+). The enzyme catalyses 2alpha-hydroxytaxusin + reduced [NADPH--hemoprotein reductase] + O2 = 2alpha,7beta-dihydroxytaxusin + oxidized [NADPH--hemoprotein reductase] + H2O + H(+). It catalyses the reaction 7beta-hydroxytaxusin + reduced [NADPH--hemoprotein reductase] + O2 = 2alpha,7beta-dihydroxytaxusin + oxidized [NADPH--hemoprotein reductase] + H2O + H(+). The protein operates within alkaloid biosynthesis; taxol biosynthesis. In terms of biological role, catalyzes the conversion of taxusin to 7-beta-hydroxytaxusin in taxol biosynthesis. Catalyzes the conversion of 2-alpha-hydroxytaxusin to 2-alpha-7-beta-hydroxytaxusin in taxol biosynthesis. The protein is Taxoid 7-beta-hydroxylase of Taxus cuspidata (Japanese yew).